Here is a 239-residue protein sequence, read N- to C-terminus: DNA repair protein RecO (239 aa).

The protein belongs to the RecO family.

Involved in DNA repair and RecF pathway recombination. The sequence is that of DNA repair protein RecO from Glaesserella parasuis serovar 5 (strain SH0165) (Haemophilus parasuis).